The following is a 196-amino-acid chain: SAGA-associated factor 11 homolog (196 aa).

Residues 102–123 form an SGF11-type zinc finger; that stretch reads CTCPNCDRLVAAARFAPHLEKC. Residues 140–196 are disordered; sequence TKEGTSASSNSSYVHSGANAGGTDDEDDVDWSSDKRKKKSTQNSRNNGSKKNNGKTF. Residues 142-153 show a composition bias toward polar residues; the sequence is EGTSASSNSSYV. Phosphoserine is present on S172. Low complexity predominate over residues 182-196; sequence NSRNNGSKKNNGKTF.

The protein belongs to the SGF11 family. Component of some SAGA transcription coactivator-HAT complexes, at least composed of Ada2b, not/nonstop, Pcaf/Gcn5, Sgf11 and Spt3. Within the SAGA complex, Sgf11, e(y)2, and not/nonstop form an additional subcomplex of SAGA called the DUB module (deubiquitination module). Interacts directly with not/nonstop. Interacts with the AMEX complex component xmas-2. Interacts with Cbp80; important for promoter recruitment of Sgf11 that is not associated with the DUB module.

The protein resides in the nucleus. Its subcellular location is the nucleoplasm. It is found in the cytoplasm. Component of the transcription regulatory histone acetylation (HAT) complex SAGA, a multiprotein complex that activates transcription by remodeling chromatin and mediating histone acetylation and deubiquitination. Within the SAGA complex, participates in a subcomplex that specifically deubiquitinates histone H2B. The SAGA complex is recruited to specific gene promoters by activators, where it is required for transcription. Required for nuclear receptor-mediated transactivation. Binds independently on SAGA to promoters in an RNA-dependent manner. Binds to mRNA and is essential for total mRNA export from the nucleus. Required to counteract heterochromatin silencing. Controls the development of neuronal connectivity in visual system by being required for accurate axon targeting in the optic lobe. Required for expression of ecdysone-induced genes such as br/broad. This is SAGA-associated factor 11 homolog from Drosophila persimilis (Fruit fly).